Consider the following 686-residue polypeptide: Bromodomain-containing factor 1 (686 aa).

Disordered regions lie at residues 1 to 69 (MTDI…PAGL) and 85 to 150 (NGYN…NPIP). A compositionally biased stretch (low complexity) spans 9-25 (NDVDVNGNNVNDDVSSN). Residues 99-120 (QGLKKEEGGQGTKQEDLDENSK) show a composition bias toward basic and acidic residues. The span at 130–139 (EPAPAPPPEP) shows a compositional bias: pro residues. Residues 145–254 (PQNPIPKHQQ…ASFEKHMLNM (110 aa)) form the Bromo 1 domain. At Ser-270 the chain carries Phosphoserine. A disordered region spans residues 283–304 (QTHNGRPKRTIHPPKSKDIYPY). The span at 287-296 (GRPKRTIHPP) shows a compositional bias: basic residues. The Bromo 2 domain maps to 312 to 421 (KRLQQAMKFC…EVFNSKWADR (110 aa)). Disordered regions lie at residues 424–447 (LDDYDSDEDSRTQGDYDDYESEYS), 486–523 (IRKERRLARGSKKRGKRSKGRSGSKNASSKGRRDKKNK), 594–636 (SSGA…EQSR), and 649–686 (DSASPLSQNGSPGQIQSAAHNGFSSSSDDDVSSESEEE). Ser-429 carries the phosphoserine modification. Acidic residues predominate over residues 438-447 (DYDDYESEYS). Residues 460 to 499 (AIQYLEEQLARMKVELQQLKKQELEKIRKERRLARGSKKR) are a coiled coil. Residues 488–507 (KERRLARGSKKRGKRSKGRS) are compositionally biased toward basic residues. In terms of domain architecture, NET spans 518–598 (RDKKNKLKTV…RQYESSSGAS (81 aa)). 2 stretches are compositionally biased toward polar residues: residues 594-620 (SSGASNGLDGTSGVTRDASSLSPTSAG) and 652-671 (SPLSQNGSPGQIQSAAHNGF). A phosphoserine mark is found at Ser-615 and Ser-659. Residues 675–686 (SDDDVSSESEEE) show a composition bias toward acidic residues.

The protein belongs to the BET family. Interacts with the TFIID subunit TAF7 and with acetylated histones H3 and H4. Post-translationally, phosphorylated by the casein kinase CK2 complex.

The protein localises to the nucleus. In terms of biological role, transcription factor involved in the expression of a broad class of genes including snRNAs. Required for sporulation and DNA-damage repair. Prevents the spreading of SIR silencing at telomeres and protects histone H4, but not H3, from deacetylation. The sequence is that of Bromodomain-containing factor 1 (BDF1) from Saccharomyces cerevisiae (strain ATCC 204508 / S288c) (Baker's yeast).